Reading from the N-terminus, the 263-residue chain is Trem-like transcript 4 protein (263 aa).

The first 28 residues, 1–28 (MAWRYSQLLLVPVQLVFLASVCCPGVWG), serve as a signal peptide directing secretion. Positions 29–132 (STVSEELHRM…LREVTVLRNI (104 aa)) constitute an Ig-like V-type domain. Residues 29-200 (STVSEELHRM…GWTSPGLLVS (172 aa)) are Extracellular-facing. Cys-47 and Cys-116 are joined by a disulfide. The N-linked (GlcNAc...) asparagine glycan is linked to Asn-100. Positions 168 to 191 (SPEETTDSSINGTGHRNQSSSSPG) are disordered. A helical transmembrane segment spans residues 201-221 (VQYGLLLLKALMLSVFCVLLC). Residues 222 to 263 (WRSGQGREYMAETMELSKLPHISKSLDTVSHISGYEKKANWY) lie on the Cytoplasmic side of the membrane.

In terms of assembly, interacts with TYROBP/DAP12. Predominantly expressed in spleen, with highest levels on selected populations of macrophages, including red pulp macrophages, and on subsets of dendritic cells (DC), mostly on CD8alpha(+) DC (at protein level). Also expressed on blood and spleen Ly6C(low) monocytes (at protein level). Not expressed on lymphocytes or granulocytes (at protein level).

Its subcellular location is the cell membrane. Functionally, positively regulates Toll-like receptor signaling via TLR7, TLR9 and TLR13 in neutrophils and splenic macrophages. Regulates TLR7 signaling by controlling ligand-induced recruitment of TLR7 from the endoplasmic reticulum to endosomes and lysosomes. Positively regulates Toll-like receptor TLR9-induced production of inflammatory cytokines but is dispensable for IFNB1 production. Involved in the anti-viral response to several viruses including influenza virus, vesicular stomatitis virus and cytomegalovirus. Binds to late apoptotic, and necrotic cells, but not living or early apoptotic cells, but is not essential for uptake of dying cells by dendritic cells (DCs). Does not bind nucleic acids. May participate in antigen presentation. The protein is Trem-like transcript 4 protein (Treml4) of Mus musculus (Mouse).